Reading from the N-terminus, the 32-residue chain is Calcitonin (32 aa).

Cys1 and Cys7 are oxidised to a cystine. Pro32 carries the post-translational modification Proline amide.

This sequence belongs to the calcitonin family.

It is found in the secreted. In terms of biological role, calcitonin is a peptide hormone that causes a rapid but short-lived drop in the level of calcium and phosphate in blood by promoting the incorporation of those ions in the bones. Calcitonin function is mediated by the calcitonin receptor/CALCR and the CALCR-RAMP2 (AMYR2) receptor complex. This chain is Calcitonin (CALCA), found in Bos taurus (Bovine).